A 505-amino-acid polypeptide reads, in one-letter code: RNA-splicing ligase RtcB homolog (505 aa).

Residues aspartate 119, cysteine 122, histidine 227, histidine 259, and histidine 353 each contribute to the Mn(2+) site. GMP is bound at residue 226-230 (NHYAE). GMP is bound by residues 353–354 (HN), 402–405 (GGTM), serine 409, 428–431 (HGAG), and lysine 504. The GMP-histidine intermediate role is filled by histidine 428.

This sequence belongs to the RtcB family. In terms of assembly, catalytic component of the tRNA-splicing ligase complex. The cofactor is Mn(2+).

The catalysed reaction is a 3'-end 3'-phospho-ribonucleotide-RNA + a 5'-end dephospho-ribonucleoside-RNA + GTP = a ribonucleotidyl-ribonucleotide-RNA + GMP + diphosphate. The enzyme catalyses a 3'-end 2',3'-cyclophospho-ribonucleotide-RNA + a 5'-end dephospho-ribonucleoside-RNA + GTP + H2O = a ribonucleotidyl-ribonucleotide-RNA + GMP + diphosphate + H(+). Its function is as follows. Catalytic subunit of the tRNA-splicing ligase complex that acts by directly joining spliced tRNA halves to mature-sized tRNAs by incorporating the precursor-derived splice junction phosphate into the mature tRNA as a canonical 3',5'-phosphodiester. May act as an RNA ligase with broad substrate specificity, and may function toward other RNAs. The protein is RNA-splicing ligase RtcB homolog of Nematostella vectensis (Starlet sea anemone).